The primary structure comprises 768 residues: Translation initiation factor IF-2, chloroplastic (768 aa).

3 disordered regions span residues 1 to 20 (MFLN…SNIN), 54 to 77 (KSES…DKKS), and 155 to 176 (KKVA…PPES). The segment covering 54–65 (KSESHTGGEQHL) has biased composition (basic and acidic residues). Polar residues predominate over residues 160–176 (TPSQNSASIQSNSPPES). The region spanning 261-434 (KRPPIVTVMG…TLLAELEDLK (174 aa)) is the tr-type G domain. Residues 270–277 (GHVDHGKT), 320–324 (DTPGH), and 374–377 (SKID) contribute to the GTP site.

It belongs to the TRAFAC class translation factor GTPase superfamily. Classic translation factor GTPase family. IF-2 subfamily.

It localises to the plastid. The protein localises to the chloroplast. One of the essential components for the initiation of protein synthesis. Protects formylmethionyl-tRNA from spontaneous hydrolysis and promotes its binding to the 30S ribosomal subunits. Also involved in the hydrolysis of GTP during the formation of the 70S ribosomal complex. The sequence is that of Translation initiation factor IF-2, chloroplastic (infB) from Pyropia yezoensis (Susabi-nori).